The following is a 218-amino-acid chain: Adenylate kinase (218 aa).

10-15 (GAGKGT) contacts ATP. The tract at residues 30–59 (STGDMLRAAVKAGTPLGIEAKKVMDAGGLM) is NMP. Residues threonine 31, arginine 36, 57–59 (GLM), 85–88 (GYPR), and glutamine 92 contribute to the AMP site. Residues 122-159 (GRWVHLASGRSYNTQSNPPKVAGQDDITGEALIQRDDD) form an LID region. ATP-binding positions include arginine 123 and 132–133 (SY). Positions 156 and 167 each coordinate AMP. An ATP-binding site is contributed by glycine 203.

This sequence belongs to the adenylate kinase family. Monomer.

The protein localises to the cytoplasm. The enzyme catalyses AMP + ATP = 2 ADP. Its pathway is purine metabolism; AMP biosynthesis via salvage pathway; AMP from ADP: step 1/1. In terms of biological role, catalyzes the reversible transfer of the terminal phosphate group between ATP and AMP. Plays an important role in cellular energy homeostasis and in adenine nucleotide metabolism. The polypeptide is Adenylate kinase (Bordetella avium (strain 197N)).